A 169-amino-acid chain; its full sequence is Putative tRNA (cytidine(34)-2'-O)-methyltransferase (169 aa).

Residues Val-79, Gly-104, Ile-125, and Ser-134 each coordinate S-adenosyl-L-methionine.

The protein belongs to the class IV-like SAM-binding methyltransferase superfamily. RNA methyltransferase TrmH family. TrmL subfamily.

It is found in the cytoplasm. It carries out the reaction cytidine(34) in tRNA + S-adenosyl-L-methionine = 2'-O-methylcytidine(34) in tRNA + S-adenosyl-L-homocysteine + H(+). The catalysed reaction is 5-carboxymethylaminomethyluridine(34) in tRNA(Leu) + S-adenosyl-L-methionine = 5-carboxymethylaminomethyl-2'-O-methyluridine(34) in tRNA(Leu) + S-adenosyl-L-homocysteine + H(+). Its function is as follows. Could methylate the ribose at the nucleotide 34 wobble position in tRNA. This chain is Putative tRNA (cytidine(34)-2'-O)-methyltransferase, found in Lactococcus lactis subsp. cremoris (strain MG1363).